A 513-amino-acid polypeptide reads, in one-letter code: Autophagy-related protein 18 (513 aa).

The WD 1 repeat unit spans residues 2–40 (SDLPIINFINFNQNGTCISIGTSQGFKIFNCEPFGRFYQ). Positions 167–225 (NNINIKKSDAAEDPLRKDHFAYDPSDHSHPQSTTESTSNNHNRTYSSGNNNNTNSNPNK) are disordered. Over residues 172–195 (KKSDAAEDPLRKDHFAYDPSDHSH) the composition is skewed to basic and acidic residues. Positions 205–225 (NNHNRTYSSGNNNNTNSNPNK) are enriched in low complexity. Residues 248-288 (AHKGEIAALKLSADGTLLATASEKGTIIRVFNVENGSKVYQ) form a WD 2 repeat. The interval 289-292 (FRRG) is necessary for proper localization to vacuole membrane. The L/FRRG motif motif lies at 289–293 (FRRGT). One copy of the WD 3 repeat lies at 293 to 332 (TYSTKISSLSFSKDNQFLAVCSSSKTVHIFKLGEKIIDNT). The tract at residues 333-398 (KPNELNSDDD…TVGRMIRKSS (66 aa)) is disordered. The span at 338-369 (NSDDDMDDDLLPQFENGDDEEEVDEETLDEEA) shows a compositional bias: acidic residues.

It belongs to the WD repeat PROPPIN family. Component of the PI(3,5)P2 regulatory complex. Interacts with ATG2 and ATG9. The ATG2-ATG18 complex is essential for autophagosome formation.

The protein resides in the preautophagosomal structure membrane. Its subcellular location is the vacuole membrane. The protein localises to the endosome membrane. In terms of biological role, component of the PI(3,5)P2 regulatory complex that regulates both the synthesis and turnover of phosphatidylinositol 3,5-bisphosphate (PtdIns(3,5)P2). Plays an important role in osmotically-induced vacuole fragmentation. Required for cytoplasm to vacuole transport (Cvt) vesicle formation, pexophagy and starvation-induced autophagy. Involved in correct ATG9 trafficking to the pre-autophagosomal structure. With ATG2, protects ATG8 from ATG4-mediated cleavage. This chain is Autophagy-related protein 18, found in Kluyveromyces marxianus (strain DMKU3-1042 / BCC 29191 / NBRC 104275) (Yeast).